Consider the following 275-residue polypeptide: 3',5'-cyclic adenosine monophosphate phosphodiesterase CpdA (275 aa).

Fe cation contacts are provided by D22, H24, D64, N94, H164, H203, and H205. Residues H24, D64, and 94–95 (NH) each bind AMP. Residue H205 participates in AMP binding.

It belongs to the cyclic nucleotide phosphodiesterase class-III family. Requires Fe(2+) as cofactor.

The catalysed reaction is 3',5'-cyclic AMP + H2O = AMP + H(+). Hydrolyzes cAMP to 5'-AMP. Plays an important regulatory role in modulating the intracellular concentration of cAMP, thereby influencing cAMP-dependent processes. The polypeptide is 3',5'-cyclic adenosine monophosphate phosphodiesterase CpdA (Escherichia coli O157:H7).